The primary structure comprises 490 residues: Cytochrome P450 71A22 (490 aa).

Residues 2–22 (ESMIRIILLSLIIFITILFFI) form a helical membrane-spanning segment. Cys-432 lines the heme pocket.

Belongs to the cytochrome P450 family. Heme serves as cofactor.

Its subcellular location is the membrane. This is Cytochrome P450 71A22 (CYP71A22) from Arabidopsis thaliana (Mouse-ear cress).